The following is a 370-amino-acid chain: MSMNSFGHLFRVTTWGESHGPALGATVDGCPPNVAVSEEMLQHWLDKRRPGQNKNTTQRNEPDAVRILSGVFEGKSTGTPIQLMIENTDQRSRDYGEIAQTFRPGHADITYFQKYGNRDYRGGGRSSARETAARVAAGGVAREALKSLAPGIEIKGYMTRMGEMEIDRARFDWSAIDQNDFWIPDAAAVQDWEDYLQALRKQHDSVGAVVEVVARGVPAGIGAPIYGKLDTDLAAAMMSINAVKAVEIGEGMNAALLKGSENADEIFMGNDGAPVYSSNHAGGILGGISTGQDVVIRFAVKPTSSILTPRQSIRKDGTAAEVITKGRHDPCVGIRAVPVAEAMMAFVILDHILLHRGQIGENQGVIGAPD.

Residue Arg48 participates in NADP(+) binding. FMN-binding positions include 125–127 (RSS), 241–242 (NA), Gly286, 301–305 (KPTSS), and Arg327.

The protein belongs to the chorismate synthase family. As to quaternary structure, homotetramer. FMNH2 serves as cofactor.

It catalyses the reaction 5-O-(1-carboxyvinyl)-3-phosphoshikimate = chorismate + phosphate. The protein operates within metabolic intermediate biosynthesis; chorismate biosynthesis; chorismate from D-erythrose 4-phosphate and phosphoenolpyruvate: step 7/7. Its function is as follows. Catalyzes the anti-1,4-elimination of the C-3 phosphate and the C-6 proR hydrogen from 5-enolpyruvylshikimate-3-phosphate (EPSP) to yield chorismate, which is the branch point compound that serves as the starting substrate for the three terminal pathways of aromatic amino acid biosynthesis. This reaction introduces a second double bond into the aromatic ring system. The chain is Chorismate synthase from Ruegeria sp. (strain TM1040) (Silicibacter sp.).